Here is a 267-residue protein sequence, read N- to C-terminus: Type II pantothenate kinase (267 aa).

Position 6 to 13 (6 to 13 (DAGGTLIK)) interacts with ATP. The active-site Proton acceptor is the Glu70. Residues Thr99, 121–125 (GGMIQ), Tyr137, and Ser225 each bind ATP.

This sequence belongs to the type II pantothenate kinase family. As to quaternary structure, homodimer.

The protein localises to the cytoplasm. It carries out the reaction (R)-pantothenate + ATP = (R)-4'-phosphopantothenate + ADP + H(+). It functions in the pathway cofactor biosynthesis; coenzyme A biosynthesis; CoA from (R)-pantothenate: step 1/5. In terms of biological role, catalyzes the phosphorylation of pantothenate (Pan), the first step in CoA biosynthesis. In Staphylococcus aureus (strain USA300), this protein is Type II pantothenate kinase.